We begin with the raw amino-acid sequence, 633 residues long: uncharacterized protein (633 aa).

The segment at 1–188 (MNNRGGFSHP…GQSSFYNSSY (188 aa)) is disordered. 2 stretches are compositionally biased toward low complexity: residues 32-80 (GQPQ…GGNN) and 104-148 (NNGN…TNSR). Gly residues predominate over residues 152 to 178 (RGGSSRGGSSRGGNSGSSRGGSRGGYR). Positions 580–607 (KSKNWTVDQASDELKKLSKNLRLLVSKH) form a coiled coil. Residues 611-633 (TKFQPPSADHTTQFEQDDEEEEN) are disordered.

This is an uncharacterized protein from Dictyostelium discoideum (Social amoeba).